Reading from the N-terminus, the 338-residue chain is Lipoate-protein ligase A (338 aa).

The BPL/LPL catalytic domain maps to 29-216 (SPNQRVLFLW…AFFAYYDEQV (188 aa)). ATP contacts are provided by residues Arg71, 76-79 (GAVF), and Lys134. (R)-lipoate is bound at residue Lys134.

This sequence belongs to the LplA family. As to quaternary structure, monomer.

The protein localises to the cytoplasm. The catalysed reaction is L-lysyl-[lipoyl-carrier protein] + (R)-lipoate + ATP = N(6)-[(R)-lipoyl]-L-lysyl-[lipoyl-carrier protein] + AMP + diphosphate + H(+). The protein operates within protein modification; protein lipoylation via exogenous pathway; protein N(6)-(lipoyl)lysine from lipoate: step 1/2. It functions in the pathway protein modification; protein lipoylation via exogenous pathway; protein N(6)-(lipoyl)lysine from lipoate: step 2/2. Its function is as follows. Catalyzes both the ATP-dependent activation of exogenously supplied lipoate to lipoyl-AMP and the transfer of the activated lipoyl onto the lipoyl domains of lipoate-dependent enzymes. The sequence is that of Lipoate-protein ligase A from Yersinia pseudotuberculosis serotype O:1b (strain IP 31758).